Consider the following 357-residue polypeptide: Heat-inducible transcription repressor HrcA (357 aa).

This sequence belongs to the HrcA family.

Its function is as follows. Negative regulator of class I heat shock genes (grpE-dnaK-dnaJ and groELS operons). Prevents heat-shock induction of these operons. This is Heat-inducible transcription repressor HrcA from Anabaena sp. (strain L31).